The primary structure comprises 288 residues: Nucleotide-binding protein PM0169 (288 aa).

Residue 8–15 participates in ATP binding; that stretch reads GHSGAGKS. 56–59 is a GTP binding site; the sequence is DIRN.

This sequence belongs to the RapZ-like family.

Its function is as follows. Displays ATPase and GTPase activities. The polypeptide is Nucleotide-binding protein PM0169 (Pasteurella multocida (strain Pm70)).